The chain runs to 36 residues: MDSRLLIVLIPVLAAASWAVYNIGRVALQQFRKMTS.

Residues methionine 1–arginine 4 are Lumenal-facing. A helical membrane pass occupies residues leucine 5–isoleucine 23. Residues glycine 24–serine 36 lie on the Stromal side of the membrane.

This sequence belongs to the PsbY family. As to quaternary structure, PSII is composed of 1 copy each of membrane proteins PsbA, PsbB, PsbC, PsbD, PsbE, PsbF, PsbH, PsbI, PsbJ, PsbK, PsbL, PsbM, PsbT, PsbX, PsbY, PsbZ, Psb30/Ycf12, at least 3 peripheral proteins of the oxygen-evolving complex and a large number of cofactors. It forms dimeric complexes.

The protein localises to the plastid. It localises to the chloroplast thylakoid membrane. Functionally, loosely associated component of the core of photosystem II (PSII), it is not always seen in crystals. PSII is a light-driven water plastoquinone oxidoreductase, using light energy to abstract electrons from H(2)O, generating a proton gradient subsequently used for ATP formation. The chain is Photosystem II reaction center protein Y from Porphyra purpurea (Red seaweed).